A 555-amino-acid chain; its full sequence is MFYSKSRPQHAARTNVAQAAANEKPKVPELEEFLTKRDYLGAIALLSFRRHANRNDLKNLEWLAYCYFHYGEHDKALVIYKELLQHEDPDPMFFVYSAACLYYMGMYKEAEEQALQGPKCALQTRILFHSAQRQGNDDKLMAYHGQLTDSIEDQLTLASIHYQRSHFQEATDIYKRLLLEHRDYLRSTVVYVALCYCKLDYYDVSLEILGVYLSAFPDSAIAVNLKACNHFRMYNGKAAEAELKTLAELSGGQHLDHDLIRHNLVVFRGGENALQVLPPLSDIPPEARLNLVIHHLRHHEVGEAFGLIKDMEPSTPPEFILKAVVHAMLGQVKGDPEHLKKAQQYYQLVGASASECDTIPGRQCMASCFFLLKQFEDVLVFLSSIKTYFLNDDDFNWNLGIAKAATGKYKEAEETLLQIANDKYRNEYTYTSWLARCYIMNGKARLAWERYLQLETNDESYQLLLLIANDCYKMGAFYFACKAFDVLERLDPAPEYLEGKKGAACGAFQMIVAGKEPKDLLRDVISLLRGNNSADQCEPIVAVMRKWAKNNGVKL.

TPR repeat units follow at residues 57–90 (LKNL…EDPD), 151–184 (IEDQ…HRDY), and 393–426 (DDFN…KYRN).

This sequence belongs to the IFT56 family. Component of the IFT complex B.

It localises to the cell projection. Its subcellular location is the cilium. The protein resides in the flagellum. In terms of biological role, component of the intraflagellar transport (IFT) complex B required for transport of proteins in the motile cilium. Required for transport of specific ciliary cargo proteins related to motility, while it is neither required for IFT complex B assembly or motion nor for cilium assembly. This Chlamydomonas reinhardtii (Chlamydomonas smithii) protein is Intraflagellar transport protein 56.